Consider the following 1597-residue polypeptide: Pentafunctional AROM polypeptide (1597 aa).

The tract at residues 1–384 is 3-dehydroquinate synthase; the sequence is MGVPTKISIL…HEPRASTVSN (384 aa). NAD(+) is bound by residues 44 to 46, 81 to 84, 114 to 116, and Asp119; these read DTN, ESSK, and GGV. Arg130 contacts 7-phospho-2-dehydro-3-deoxy-D-arabino-heptonate. 139–140 provides a ligand contact to NAD(+); it reads TT. Residues Asp146 and Lys152 each contribute to the 7-phospho-2-dehydro-3-deoxy-D-arabino-heptonate site. Lys161 contacts NAD(+). Asn162 lines the 7-phospho-2-dehydro-3-deoxy-D-arabino-heptonate pocket. Residues 179–182 and Asn190 contribute to the NAD(+) site; that span reads FLNT. Glu194 contributes to the Zn(2+) binding site. 7-phospho-2-dehydro-3-deoxy-D-arabino-heptonate contacts are provided by residues 194–197 and Lys250; that span reads EVIK. Glu260 functions as the Proton acceptor; for 3-dehydroquinate synthase activity in the catalytic mechanism. 7-phospho-2-dehydro-3-deoxy-D-arabino-heptonate contacts are provided by residues 264 to 268 and His271; that span reads RNLLN. Residue His271 participates in Zn(2+) binding. Residue His275 is the Proton acceptor; for 3-dehydroquinate synthase activity of the active site. 7-phospho-2-dehydro-3-deoxy-D-arabino-heptonate-binding residues include His287 and Lys356. Zn(2+) is bound at residue His287. The segment at 397-842 is EPSP synthase; it reads VSPGVPKNLN…WDSLAQTFKV (446 aa). Residue Cys824 is the For EPSP synthase activity of the active site. Positions 866-1057 are shikimate kinase; that stretch reads ASIFIIGMRG…RSKENTFFVS (192 aa). 872 to 879 serves as a coordination point for ATP; the sequence is GMRGAGKT. The tract at residues 1058 to 1278 is 3-dehydroquinase; it reads LTLPDLAPAA…AAPGQLSARE (221 aa). Residue His1181 is the Proton acceptor; for 3-dehydroquinate dehydratase activity of the active site. Catalysis depends on Lys1209, which acts as the Schiff-base intermediate with substrate; for 3-dehydroquinate dehydratase activity. Residues 1291-1597 are shikimate dehydrogenase; it reads SKKFAVIGNP…VQPKDDDIST (307 aa).

This sequence in the N-terminal section; belongs to the sugar phosphate cyclases superfamily. Dehydroquinate synthase family. It in the 2nd section; belongs to the EPSP synthase family. In the 3rd section; belongs to the shikimate kinase family. The protein in the 4th section; belongs to the type-I 3-dehydroquinase family. This sequence in the C-terminal section; belongs to the shikimate dehydrogenase family. In terms of assembly, homodimer. Zn(2+) serves as cofactor.

The protein resides in the cytoplasm. The catalysed reaction is 7-phospho-2-dehydro-3-deoxy-D-arabino-heptonate = 3-dehydroquinate + phosphate. It carries out the reaction 3-dehydroquinate = 3-dehydroshikimate + H2O. It catalyses the reaction shikimate + NADP(+) = 3-dehydroshikimate + NADPH + H(+). The enzyme catalyses shikimate + ATP = 3-phosphoshikimate + ADP + H(+). The catalysed reaction is 3-phosphoshikimate + phosphoenolpyruvate = 5-O-(1-carboxyvinyl)-3-phosphoshikimate + phosphate. Its pathway is metabolic intermediate biosynthesis; chorismate biosynthesis; chorismate from D-erythrose 4-phosphate and phosphoenolpyruvate: step 2/7. The protein operates within metabolic intermediate biosynthesis; chorismate biosynthesis; chorismate from D-erythrose 4-phosphate and phosphoenolpyruvate: step 3/7. It participates in metabolic intermediate biosynthesis; chorismate biosynthesis; chorismate from D-erythrose 4-phosphate and phosphoenolpyruvate: step 4/7. It functions in the pathway metabolic intermediate biosynthesis; chorismate biosynthesis; chorismate from D-erythrose 4-phosphate and phosphoenolpyruvate: step 5/7. Its pathway is metabolic intermediate biosynthesis; chorismate biosynthesis; chorismate from D-erythrose 4-phosphate and phosphoenolpyruvate: step 6/7. Functionally, the AROM polypeptide catalyzes 5 consecutive enzymatic reactions in prechorismate polyaromatic amino acid biosynthesis. The polypeptide is Pentafunctional AROM polypeptide (Ajellomyces dermatitidis (strain ER-3 / ATCC MYA-2586) (Blastomyces dermatitidis)).